We begin with the raw amino-acid sequence, 280 residues long: tRNA (guanine-N(1)-)-methyltransferase (280 aa).

Positions 71 to 94 are disordered; sequence DDVSSGTASTQDLQSALPHLSKPR. Over residues 74–84 the composition is skewed to polar residues; it reads SSGTASTQDLQ. S-adenosyl-L-methionine contacts are provided by residues Gly-146 and 170-175; that span reads IGDYVL.

This sequence belongs to the RNA methyltransferase TrmD family. In terms of assembly, homodimer.

The protein resides in the cytoplasm. It catalyses the reaction guanosine(37) in tRNA + S-adenosyl-L-methionine = N(1)-methylguanosine(37) in tRNA + S-adenosyl-L-homocysteine + H(+). In terms of biological role, specifically methylates guanosine-37 in various tRNAs. The sequence is that of tRNA (guanine-N(1)-)-methyltransferase from Corynebacterium aurimucosum (strain ATCC 700975 / DSM 44827 / CIP 107346 / CN-1) (Corynebacterium nigricans).